The following is a 436-amino-acid chain: 2-(3-amino-3-carboxypropyl)histidine synthase subunit 1 (436 aa).

Positions 1-27 (MAEVKKSIPKRRFVGKKNRKENNLDGS) are disordered. The segment covering 7–19 (SIPKRRFVGKKNR) has biased composition (basic residues). Residues C130, C239, and C368 each contribute to the [4Fe-4S] cluster site. The tract at residues 417–436 (PNNPENRPLPNRKKTGPVSS) is disordered. A compositionally biased stretch (basic residues) spans 426–436 (PNRKKTGPVSS).

This sequence belongs to the DPH1/DPH2 family. DPH1 subfamily. As to quaternary structure, component of the 2-(3-amino-3-carboxypropyl)histidine synthase complex composed of dph1, dph2, dph3 and a NADH-dependent reductase, predominantly cbr1. [4Fe-4S] cluster serves as cofactor.

It is found in the cytoplasm. It carries out the reaction L-histidyl-[translation elongation factor 2] + S-adenosyl-L-methionine = 2-[(3S)-amino-3-carboxypropyl]-L-histidyl-[translation elongation factor 2] + S-methyl-5'-thioadenosine + H(+). Its pathway is protein modification; peptidyl-diphthamide biosynthesis. In terms of biological role, catalyzes the first step of diphthamide biosynthesis, a post-translational modification of histidine which occurs in elongation factor 2. Dph1 and dph2 transfer a 3-amino-3-carboxypropyl (ACP) group from S-adenosyl-L-methionine (SAM) to a histidine residue, the reaction is assisted by a reduction system comprising dph3 and a NADH-dependent reductase, predominantly cbr1. The protein is 2-(3-amino-3-carboxypropyl)histidine synthase subunit 1 (dph1) of Schizosaccharomyces pombe (strain 972 / ATCC 24843) (Fission yeast).